Reading from the N-terminus, the 210-residue chain is Putative 3-methyladenine DNA glycosylase (210 aa).

Belongs to the DNA glycosylase MPG family.

This Lactobacillus acidophilus (strain ATCC 700396 / NCK56 / N2 / NCFM) protein is Putative 3-methyladenine DNA glycosylase.